Consider the following 860-residue polypeptide: DNA mismatch repair protein MutS (860 aa).

Position 607-614 (Gly607–Ser614) interacts with ATP.

This sequence belongs to the DNA mismatch repair MutS family.

In terms of biological role, this protein is involved in the repair of mismatches in DNA. It is possible that it carries out the mismatch recognition step. This protein has a weak ATPase activity. This is DNA mismatch repair protein MutS from Listeria monocytogenes serovar 1/2a (strain ATCC BAA-679 / EGD-e).